The sequence spans 304 residues: Putative S-adenosyl-L-methionine-dependent methyltransferase MAV_1058 (304 aa).

S-adenosyl-L-methionine-binding positions include aspartate 128 and 157–158; that span reads DL.

The protein belongs to the UPF0677 family.

Its function is as follows. Exhibits S-adenosyl-L-methionine-dependent methyltransferase activity. The chain is Putative S-adenosyl-L-methionine-dependent methyltransferase MAV_1058 from Mycobacterium avium (strain 104).